Consider the following 588-residue polypeptide: Ribonuclease Y (588 aa).

Residues 7–27 (VLLVAVLLLALIVLGAVLVGV) traverse the membrane as a helical segment. Positions 130–162 (ARRSGEREAAVLATTTREQAAEVERRAARMDDR) are disordered. The segment covering 148–162 (QAAEVERRAARMDDR) has biased composition (basic and acidic residues). In terms of domain architecture, KH spans 278 to 359 (VVSVLHLPGD…HRIEEVHDLA (82 aa)). An HD domain is found at 404–497 (VLKHLVETAH…TQASDACSGG (94 aa)).

It belongs to the RNase Y family.

It localises to the cell membrane. Its function is as follows. Endoribonuclease that initiates mRNA decay. This is Ribonuclease Y from Salinispora arenicola (strain CNS-205).